We begin with the raw amino-acid sequence, 432 residues long: G-protein coupled receptor 22 (432 aa).

Residues 1–45 are Extracellular-facing; the sequence is MCFSPVLEINMQSESNVTVRDDIDDIDTNMYQPLSYPLSFQVSLT. Residue N16 is glycosylated (N-linked (GlcNAc...) asparagine). The chain crosses the membrane as a helical span at residues 46–66; the sequence is GFLMLEIVLGLGSNLTVLVLY. Topologically, residues 67–85 are cytoplasmic; it reads CMKSNLINSVSNIITMNLH. A helical membrane pass occupies residues 86–106; sequence VLDVIICVGCIPLTIVILLLS. Over 107–115 the chain is Extracellular; sequence LESNTALIC. Residues 116 to 136 traverse the membrane as a helical segment; sequence CFHEACVSFASVSTAINVFAI. Residues 137–156 lie on the Cytoplasmic side of the membrane; it reads TLDRYDISVKPANRILTMGR. A helical membrane pass occupies residues 157-177; sequence AVMLMTSIWIFSFFSFLIPFI. Over 178 to 208 the chain is Extracellular; it reads EVNFFSLQSGNTWANKTLLCVSTSEYYTELG. A glycan (N-linked (GlcNAc...) asparagine) is linked at N192. A helical transmembrane segment spans residues 209–229; the sequence is MYYHLLVQIPIFFFTVIVMLI. The Cytoplasmic portion of the chain corresponds to 230–314; sequence TYTKILQALN…ERQKRVFKMS (85 aa). A helical transmembrane segment spans residues 315 to 335; the sequence is LLIISTFLLCWTPISVLNTTI. Topologically, residues 336–348 are extracellular; the sequence is LCLGPSDLLVKLR. The chain crosses the membrane as a helical span at residues 349–369; it reads LCFLVMAYGTTIFHPLLYAFT. Topologically, residues 370-432 are cytoplasmic; that stretch reads RQKFQKVLKS…KCLVPQVVTD (63 aa).

It belongs to the G-protein coupled receptor 1 family. In terms of tissue distribution, abundant levels detected in the brain and heart and no detectable expression in other peripheral tissues.

The protein localises to the cell membrane. Functionally, orphan G-protein coupled receptor. Seems to act through a G(i)/G(o) mediated pathway. May be involved in ciliogenesis. The chain is G-protein coupled receptor 22 (Gpr22) from Mus musculus (Mouse).